The sequence spans 304 residues: Murein tetrapeptide carboxypeptidase (304 aa).

Ser106 serves as the catalytic Nucleophile. Residues Glu200 and His270 each act as charge relay system in the active site.

The protein belongs to the peptidase S66 family.

It localises to the cytoplasm. It carries out the reaction N-acetyl-D-glucosaminyl-N-acetylmuramoyl-L-alanyl-meso-2,6-diaminoheptanedioyl-D-alanine + H2O = N-acetyl-D-glucosaminyl-N-acetylmuramoyl-L-alanyl-meso-2,6-diaminoheptanedioate + D-alanine. Its pathway is cell wall biogenesis; peptidoglycan recycling. Its activity is regulated as follows. Inhibited by beta-lactams containing a D-amino acid side chain. Functionally, releases the terminal D-alanine residue from the cytoplasmic tetrapeptide recycling product L-Ala-gamma-D-Glu-meso-Dap-D-Ala. To a lesser extent, can also cleave D-Ala from murein derivatives containing the tetrapeptide, i.e. MurNAc-tetrapeptide, UDP-MurNAc-tetrapeptide, GlcNAc-MurNAc-tetrapeptide, and GlcNAc-anhMurNAc-tetrapeptide. Does not act on murein sacculi or cross-linked muropeptides. The tripeptides produced by the LcdA reaction can then be reused as peptidoglycan building blocks; LcdA is thereby involved in murein recycling. Is also essential for viability during stationary phase. The polypeptide is Murein tetrapeptide carboxypeptidase (ldcA) (Escherichia coli (strain K12)).